A 622-amino-acid chain; its full sequence is 1,4-alpha-glucan branching enzyme GlgB (622 aa).

Aspartate 300 serves as the catalytic Nucleophile. Glutamate 351 serves as the catalytic Proton donor.

This sequence belongs to the glycosyl hydrolase 13 family. GlgB subfamily. As to quaternary structure, monomer.

The enzyme catalyses Transfers a segment of a (1-&gt;4)-alpha-D-glucan chain to a primary hydroxy group in a similar glucan chain.. The protein operates within glycan biosynthesis; glycogen biosynthesis. In terms of biological role, catalyzes the formation of the alpha-1,6-glucosidic linkages in glycogen by scission of a 1,4-alpha-linked oligosaccharide from growing alpha-1,4-glucan chains and the subsequent attachment of the oligosaccharide to the alpha-1,6 position. In Streptococcus agalactiae serotype III (strain NEM316), this protein is 1,4-alpha-glucan branching enzyme GlgB.